A 378-amino-acid chain; its full sequence is Putative zinc finger protein 302L (378 aa).

The C2H2-type; degenerate zinc-finger motif lies at 3–25; it reads IVCEFCDKSFDSKSKVNAHQRTK.

It belongs to the IIV-6 302L family.

The sequence is that of Putative zinc finger protein 302L from Invertebrate iridescent virus 6 (IIV-6).